We begin with the raw amino-acid sequence, 165 residues long: Type VI lipase immunity protein Tli3 (165 aa).

The N-terminal stretch at 1 to 21 is a signal peptide; that stretch reads MKCKTLLIACLFGLGSAQALA.

As to quaternary structure, interacts with the Tle3 toxin.

The protein resides in the periplasm. Its function is as follows. Immunity protein that neutralizes the toxicity of the P.aeruginosa antibacterial toxin Tle3 in the periplasm to protect the cell from fratricide intoxication. This Pseudomonas aeruginosa (strain ATCC 15692 / DSM 22644 / CIP 104116 / JCM 14847 / LMG 12228 / 1C / PRS 101 / PAO1) protein is Type VI lipase immunity protein Tli3.